A 211-amino-acid chain; its full sequence is uncharacterized protein (211 aa).

The signal sequence occupies residues 1-27 (MKRTSAALVVFLILLFLGLLFLPMFIV).

This is an uncharacterized protein from Archaeoglobus fulgidus (strain ATCC 49558 / DSM 4304 / JCM 9628 / NBRC 100126 / VC-16).